The primary structure comprises 154 residues: Endoribonuclease YbeY (154 aa).

3 residues coordinate Zn(2+): His113, His117, and His123.

It belongs to the endoribonuclease YbeY family. Zn(2+) is required as a cofactor.

It localises to the cytoplasm. In terms of biological role, single strand-specific metallo-endoribonuclease involved in late-stage 70S ribosome quality control and in maturation of the 3' terminus of the 16S rRNA. The chain is Endoribonuclease YbeY from Ehrlichia canis (strain Jake).